The primary structure comprises 196 residues: Glycerol-3-phosphate acyltransferase 2 (196 aa).

The next 5 helical transmembrane spans lie at 2-22 (GWWL…SYLI), 52-72 (VGGI…FITI), 80-100 (IVSL…FMKF), 112-132 (IIFC…LVIV), and 137-156 (YASL…GYLL).

Belongs to the PlsY family. In terms of assembly, probably interacts with PlsX.

The protein resides in the cell inner membrane. The catalysed reaction is an acyl phosphate + sn-glycerol 3-phosphate = a 1-acyl-sn-glycero-3-phosphate + phosphate. It participates in lipid metabolism; phospholipid metabolism. Its function is as follows. Catalyzes the transfer of an acyl group from acyl-phosphate (acyl-PO(4)) to glycerol-3-phosphate (G3P) to form lysophosphatidic acid (LPA). This enzyme utilizes acyl-phosphate as fatty acyl donor, but not acyl-CoA or acyl-ACP. This chain is Glycerol-3-phosphate acyltransferase 2, found in Thermotoga maritima (strain ATCC 43589 / DSM 3109 / JCM 10099 / NBRC 100826 / MSB8).